A 249-amino-acid polypeptide reads, in one-letter code: UPF0524 protein C3orf70 homolog B (249 aa).

The interval 174-230 is disordered; the sequence is GPKMGHCSSPSTSEDSGINALGGHFLESCEEESEEEDELSTDGHSSPGSLWDQDECT. A compositionally biased stretch (acidic residues) spans 201–213; that stretch reads SCEEESEEEDELS.

The protein belongs to the UPF0524 family.

Functionally, plays a role in neuronal and neurobehavioral development. Required for normal expression of the postmitotic and mature neuron markers elavl3 and eno2 and neurobehaviors related to circadian rhythm and altered light-dark conditions. This Danio rerio (Zebrafish) protein is UPF0524 protein C3orf70 homolog B.